We begin with the raw amino-acid sequence, 367 residues long: Calcium uniporter protein, mitochondrial (367 aa).

The N-terminal 12 residues, 1–12, are a transit peptide targeting the mitochondrion; it reads MAMPRVLCRVRL. The Mitochondrial matrix portion of the chain corresponds to 13 to 232; the sequence is LIHNDFSVIS…LEEKKLELEQ (220 aa). The segment at 61–80 is disordered; it reads KQDASSSSSDSDSSDSDEDD. Positions 199–233 form a coiled coil; that stretch reads REHQLQKEVELTTQLETLQQELLPLEEKKLELEQV. The chain crosses the membrane as a helical span at residues 233–253; it reads VANRRSNWMAWAGLGLMSVQF. Over 254–262 the chain is Mitochondrial intermembrane; it reads GILARLTWW. A helical membrane pass occupies residues 263 to 284; that stretch reads EYSWDIMEPVTYFVTYGTAMAA. The short motif at 266 to 276 is the Selectivity filter element; it reads WDIMEPVTYFV. Glu270 serves as a coordination point for Ca(2+). Over 285 to 367 the chain is Mitochondrial matrix; sequence YAYFVLTREE…KKQVEEKAKE (83 aa).

Belongs to the MCU (TC 1.A.77) family. As to quaternary structure, homotetramer. Component of the uniplex complex, composed of MCU, EMRE, MICU1 and MICU2 in a 4:4:1:1 stoichiometry.

It is found in the mitochondrion inner membrane. The enzyme catalyses Ca(2+)(in) = Ca(2+)(out). Its activity is regulated as follows. MCU channel activity is regulated by the heterodimer composed of MICU1 and MICU2, which act as calcium-sensors. At low calcium levels, MICU1 occludes the pore of the MCU channel, preventing mitochondrial calcium uptake. At higher calcium levels, calcium-binding to MICU1 and MICU2 induces a conformational change that weakens MCU-MICU1 interactions and moves the MICU1-MICU2 heterodimer away from the pore, allowing calcium permeation through the channel. Channel-forming and calcium-conducting subunit of the mitochondrial inner membrane calcium uniporter complex (uniplex), which mediates calcium uptake into the mitochondrial matrix. MCU channel activity is regulated by the calcium-sensor subunits of the uniplex MICU1 and MICU2. Mitochondrial calcium homeostasis plays key roles in cellular physiology and regulates ATP production, cytoplasmic calcium signals and activation of cell death pathways. In Tribolium castaneum (Red flour beetle), this protein is Calcium uniporter protein, mitochondrial.